Consider the following 84-residue polypeptide: DNA-directed RNA polymerase subunit Rpo5 (84 aa).

Belongs to the archaeal Rpo5/eukaryotic RPB5 RNA polymerase subunit family. As to quaternary structure, part of the 13-subunit RNA polymerase complex.

It is found in the cytoplasm. It catalyses the reaction RNA(n) + a ribonucleoside 5'-triphosphate = RNA(n+1) + diphosphate. In terms of biological role, DNA-dependent RNA polymerase (RNAP) catalyzes the transcription of DNA into RNA using the four ribonucleoside triphosphates as substrates. This chain is DNA-directed RNA polymerase subunit Rpo5, found in Saccharolobus solfataricus (strain ATCC 35092 / DSM 1617 / JCM 11322 / P2) (Sulfolobus solfataricus).